The sequence spans 228 residues: Octanoyltransferase (228 aa).

Residues 31–212 (GETDGILILL…KFSEVFGIHF (182 aa)) enclose the BPL/LPL catalytic domain. Residues 76–83 (RGGKITFH), 143–145 (AIG), and 156–158 (GIA) each bind substrate. Residue C174 is the Acyl-thioester intermediate of the active site.

It belongs to the LipB family.

The protein localises to the cytoplasm. It catalyses the reaction octanoyl-[ACP] + L-lysyl-[protein] = N(6)-octanoyl-L-lysyl-[protein] + holo-[ACP] + H(+). It functions in the pathway protein modification; protein lipoylation via endogenous pathway; protein N(6)-(lipoyl)lysine from octanoyl-[acyl-carrier-protein]: step 1/2. Functionally, catalyzes the transfer of endogenously produced octanoic acid from octanoyl-acyl-carrier-protein onto the lipoyl domains of lipoate-dependent enzymes. Lipoyl-ACP can also act as a substrate although octanoyl-ACP is likely to be the physiological substrate. The sequence is that of Octanoyltransferase from Thermoanaerobacter pseudethanolicus (strain ATCC 33223 / 39E) (Clostridium thermohydrosulfuricum).